A 162-amino-acid chain; its full sequence is MKSRKFFSKLKEESYDVSIFDLMNAKVYLEKDMTYLPQDYKKGYIEDFFTFFPEVLKEIKNKTEEEIEDFEIEDEEIKRVELRLCSMGSKQTGRESYEKLVKTVINYLIFINERPLHALTTRFPGGKQIIEKNGNYYCPIKNAQSNELSICEFCICKDLNEL.

It belongs to the UPF0305 family.

The sequence is that of UPF0305 protein MMP0665 from Methanococcus maripaludis (strain DSM 14266 / JCM 13030 / NBRC 101832 / S2 / LL).